The sequence spans 353 residues: Guanine nucleotide-binding protein subunit beta-5 (353 aa).

WD repeat units lie at residues 61–100 (GHGN…KEHA), 103–142 (MPCT…NENM), 151–192 (MHTN…QSFH), 194–236 (HGAD…QAFE), 237–276 (THES…EVAI), 278–320 (SKES…RVSI), and 323–352 (GHEN…LRVW).

This sequence belongs to the WD repeat G protein beta family. As to quaternary structure, component of a complex composed of RGS9 (isoform RGS9-1), GNB5 and RGS9BP; within this complex, the presence of GNB5 stabilizes both itself and RGS9 and increases RGS9 GTPase-activating protein (GAP) activity. Interacts with RGS7, forming the RGS7-GNB5 complex; within this complex, the presence of GNB5 increases RGS7 GTPase-activating protein (GAP) activity. Interacts with GPR158; promotes the GTPase activator activity of the RGS7-GNB5 complex in absence of glycine, in contrast GTPase activator activity of the RGS7-GNB5 complex is inhibited in presence of glycine. Interacts with RGS6.

It is found in the membrane. Its function is as follows. Enhances GTPase-activating protein (GAP) activity of regulator of G protein signaling (RGS) proteins, such as RGS7 and RGS9, hence involved in the termination of the signaling initiated by the G protein coupled receptors (GPCRs) by accelerating the GTP hydrolysis on the G-alpha subunits, thereby promoting their inactivation. Increases RGS7 GTPase-activating protein (GAP) activity, thereby regulating mood and cognition. Increases RGS9 GTPase-activating protein (GAP) activity, hence contributes to the deactivation of G protein signaling initiated by D(2) dopamine receptors. May play an important role in neuronal signaling, including in the parasympathetic, but not sympathetic, control of heart rate. The sequence is that of Guanine nucleotide-binding protein subunit beta-5 (GNB5) from Oryctolagus cuniculus (Rabbit).